A 107-amino-acid chain; its full sequence is Ig kappa chain V-VI region NQ5-78.2.6 (107 aa).

The framework-1 stretch occupies residues 1–23 (QILLTQSPAIMSASPGQKVTMTC). A disulfide bridge links cysteine 23 with cysteine 87. The complementarity-determining-1 stretch occupies residues 24-33 (SASSSVSYMH). Positions 34–48 (WYQQKSGTSPKRWIY) are framework-2. The segment at 49 to 55 (DTSKLAS) is complementarity-determining-2. The tract at residues 56 to 87 (GVPARFXGSGSATSYSLTITSMQAEDAATYYC) is framework-3. The tract at residues 88-96 (QQWSSNPLT) is complementarity-determining-3. The tract at residues 97–106 (FGSGTKLEXK) is framework-4.

Its function is as follows. Anti-2-phenyl oxazolone (PHOX) Antibody. This Mus musculus (Mouse) protein is Ig kappa chain V-VI region NQ5-78.2.6.